The primary structure comprises 606 residues: NADH-ubiquinone oxidoreductase chain 5 (606 aa).

16 helical membrane-spanning segments follow: residues 4–24 (FPSL…TTTI), 38–58 (NIIS…IHSG), 87–107 (MIFV…SMWY), 114–134 (ITQF…LVTA), 140–160 (LFIG…WWYG), 171–191 (AILY…WFLF), 213–233 (LMGL…HPWL), 241–261 (TPVS…FLLI), 273–293 (VQTF…ICAL), 301–320 (IIAF…IGIN), 325–347 (AFLH…GSII), 366–386 (MPFT…MPFL), 409–429 (LLIT…MIFF), 457–477 (LLIG…PTTI), 488–508 (LTAL…SLAT), and 583–603 (LIKL…LLLM).

It belongs to the complex I subunit 5 family. As to quaternary structure, core subunit of respiratory chain NADH dehydrogenase (Complex I) which is composed of 45 different subunits.

The protein localises to the mitochondrion inner membrane. It catalyses the reaction a ubiquinone + NADH + 5 H(+)(in) = a ubiquinol + NAD(+) + 4 H(+)(out). Core subunit of the mitochondrial membrane respiratory chain NADH dehydrogenase (Complex I) which catalyzes electron transfer from NADH through the respiratory chain, using ubiquinone as an electron acceptor. Essential for the catalytic activity and assembly of complex I. This chain is NADH-ubiquinone oxidoreductase chain 5 (MT-ND5), found in Ceratotherium simum (White rhinoceros).